We begin with the raw amino-acid sequence, 249 residues long: MVDFRKFYKENANVAYTVLGYPNLQTSEAFLQRLDQSPIDILELGVAYSDPIADGEIIADAAKIALDQGVDIHSVFELLARIKTKKALVFMVYYNLIFSYGLEKFVKKAKSLGICALIVPELSFEESDDLIKECERYNIALITLVSVTTPKERVKKLVKHAKGFIYLLASIGITGTKSVEEAILQDKVKEIRSFTNLPIFVGFGIQNNQDVKRMRKVADGVIVGTSIVKCFKQGNLDIIMKDIEEIFKK.

Active-site proton acceptor residues include E43 and D54.

The protein belongs to the TrpA family. Tetramer of two alpha and two beta chains.

It catalyses the reaction (1S,2R)-1-C-(indol-3-yl)glycerol 3-phosphate + L-serine = D-glyceraldehyde 3-phosphate + L-tryptophan + H2O. Its pathway is amino-acid biosynthesis; L-tryptophan biosynthesis; L-tryptophan from chorismate: step 5/5. The alpha subunit is responsible for the aldol cleavage of indoleglycerol phosphate to indole and glyceraldehyde 3-phosphate. The chain is Tryptophan synthase alpha chain from Campylobacter jejuni subsp. jejuni serotype O:6 (strain 81116 / NCTC 11828).